The following is a 381-amino-acid chain: (S)-scoulerine 9-O-methyltransferase (381 aa).

5 residues coordinate S-adenosyl-L-methionine: Gly-223, Glu-246, Asp-266, Met-267, and Lys-280. His-284 (proton acceptor) is an active-site residue.

Belongs to the class I-like SAM-binding methyltransferase superfamily. Cation-independent O-methyltransferase family. COMT subfamily.

It catalyses the reaction (S)-scoulerine + S-adenosyl-L-methionine = (S)-tetrahydrocolumbamine + S-adenosyl-L-homocysteine + H(+). Its function is as follows. Produces a precursor of protoberberine alkaloids. The sequence is that of (S)-scoulerine 9-O-methyltransferase (SMT) from Coptis japonica (Japanese goldthread).